The sequence spans 396 residues: tRNA (guanine-N(7)-)-methyltransferase (396 aa).

Glu125, Glu150, and Asp177 together coordinate S-adenosyl-L-methionine. Substrate-binding residues include Lys203 and Asp233.

The protein belongs to the class I-like SAM-binding methyltransferase superfamily. TrmB family.

It catalyses the reaction guanosine(46) in tRNA + S-adenosyl-L-methionine = N(7)-methylguanosine(46) in tRNA + S-adenosyl-L-homocysteine. The protein operates within tRNA modification; N(7)-methylguanine-tRNA biosynthesis. In terms of biological role, catalyzes the formation of N(7)-methylguanine at position 46 (m7G46) in tRNA. This Helicobacter hepaticus (strain ATCC 51449 / 3B1) protein is tRNA (guanine-N(7)-)-methyltransferase.